Consider the following 341-residue polypeptide: Keratin-associated protein 29-1 (341 aa).

Repeat copies occupy residues 5-9 (CCPGN), 115-119 (CCQEK), 120-124 (CCDAS), 150-154 (CCDAG), 240-244 (CCVPS), 276-280 (CCKPA), and 307-311 (CCVTG). Residues 5 to 311 (CCPGNTTAIP…GCKSACCVTG (307 aa)) are 7 X 5 AA repeats of C-C-X(3).

The protein belongs to the KRTAP type 10 family.

The sequence is that of Keratin-associated protein 29-1 (KRTAP29-1) from Homo sapiens (Human).